The sequence spans 207 residues: Urease accessory protein UreG (207 aa).

13–20 contributes to the GTP binding site; it reads GPVGSGKT.

This sequence belongs to the SIMIBI class G3E GTPase family. UreG subfamily. As to quaternary structure, homodimer. UreD, UreF and UreG form a complex that acts as a GTP-hydrolysis-dependent molecular chaperone, activating the urease apoprotein by helping to assemble the nickel containing metallocenter of UreC. The UreE protein probably delivers the nickel.

Its subcellular location is the cytoplasm. In terms of biological role, facilitates the functional incorporation of the urease nickel metallocenter. This process requires GTP hydrolysis, probably effectuated by UreG. This is Urease accessory protein UreG from Azoarcus sp. (strain BH72).